The sequence spans 1316 residues: DNA-directed RNA polymerase subunit beta' (1316 aa).

Zn(2+) is bound by residues Cys60, Cys62, Cys75, and Cys78. Positions 535, 537, and 539 each coordinate Mg(2+). Residues Cys891, Cys968, Cys975, and Cys978 each coordinate Zn(2+).

It belongs to the RNA polymerase beta' chain family. As to quaternary structure, the RNAP catalytic core consists of 2 alpha, 1 beta, 1 beta' and 1 omega subunit. When a sigma factor is associated with the core the holoenzyme is formed, which can initiate transcription. It depends on Mg(2+) as a cofactor. Requires Zn(2+) as cofactor.

The enzyme catalyses RNA(n) + a ribonucleoside 5'-triphosphate = RNA(n+1) + diphosphate. DNA-dependent RNA polymerase catalyzes the transcription of DNA into RNA using the four ribonucleoside triphosphates as substrates. This is DNA-directed RNA polymerase subunit beta' from Mycobacterium tuberculosis (strain ATCC 25177 / H37Ra).